A 193-amino-acid polypeptide reads, in one-letter code: Ribonuclease HII (193 aa).

The RNase H type-2 domain maps to 1-193 (MTLGIDEAGR…SFALKNNWFS (193 aa)). A divalent metal cation-binding residues include D6, E7, and D103.

This sequence belongs to the RNase HII family. Mn(2+) is required as a cofactor. The cofactor is Mg(2+).

The protein resides in the cytoplasm. The enzyme catalyses Endonucleolytic cleavage to 5'-phosphomonoester.. In terms of biological role, endonuclease that specifically degrades the RNA of RNA-DNA hybrids. This is Ribonuclease HII from Helicobacter acinonychis (strain Sheeba).